Reading from the N-terminus, the 258-residue chain is MAVISMKELLEAGVHFGHQTRRWDPKMDEYIFTERNGIHIIDLQKTVKLVDEAYNFMRNASTDGANFLFVGTKKQASDAIAEEAARAGQYFINHRWLGGTLTNWNTIKTRIQRLKDLEAMAEDGTFEQLPKKEVVLLNKQREKLNKFLGGIKDMPGLPDVLFVVDPKKEEIAVKEANMLNIPVVAMIDTNANPEVVDVKIPANDDAIRAVRLITAKMADAIIEGRQGQDSAPEDAFVAGDENTESIEEIANIVEEGNN.

This sequence belongs to the universal ribosomal protein uS2 family.

This is Small ribosomal subunit protein uS2 from Leuconostoc citreum (strain KM20).